We begin with the raw amino-acid sequence, 368 residues long: Spermidine/putrescine import ATP-binding protein PotA (368 aa).

The region spanning 8–238 is the ABC transporter domain; sequence IELKNVSKIF…PVNLFVARFV (231 aa). Position 40–47 (40–47) interacts with ATP; that stretch reads GPSGCGKT.

It belongs to the ABC transporter superfamily. Spermidine/putrescine importer (TC 3.A.1.11.1) family. As to quaternary structure, the complex is composed of two ATP-binding proteins (PotA), two transmembrane proteins (PotB and PotC) and a solute-binding protein (PotD).

The protein resides in the cell membrane. It catalyses the reaction ATP + H2O + polyamine-[polyamine-binding protein]Side 1 = ADP + phosphate + polyamineSide 2 + [polyamine-binding protein]Side 1.. Part of the ABC transporter complex PotABCD involved in spermidine/putrescine import. Responsible for energy coupling to the transport system. This Lawsonia intracellularis (strain PHE/MN1-00) protein is Spermidine/putrescine import ATP-binding protein PotA.